The primary structure comprises 272 residues: MKRFDYLTPVGFVLGTIIIVIGIISGSGVSGFRSFLDLTSFFIVTGGLCAAVFISFPPSELKKAPSVLKQAFIRQEDNVKDLVKTFVSLSDHARKHGLLSLDDQAREIKDPFLKKGLLLAIDGWDEETIRLVMDSEIAAMEERHRKGRRVFEKAGEFAPAWGMIGTLVGLVLMLKNLNDPHMLGPNMAIALLTTLYGSLLANMVFNPIAAKLEEKTESEIFIKQVMVEGIIGVQSGKNPRNLESQLVVFSSREEWQKQPKQVKTKKGSVHEA.

4 helical membrane-spanning segments follow: residues 9 to 29 (PVGF…GSGV), 38 to 58 (LTSF…SFPP), 154 to 174 (AGEF…VLML), and 188 to 208 (AIAL…FNPI). Residues 209 to 272 (AAKLEEKTES…KTKKGSVHEA (64 aa)) are Cytoplasmic-facing.

It belongs to the MotA family.

The protein localises to the cell membrane. In terms of biological role, may be involved in some transport function. This is an uncharacterized protein from Bacillus subtilis (strain 168).